The chain runs to 211 residues: Ribonuclease HII (211 aa).

An RNase H type-2 domain is found at 17–211 (FLSAGVDEVG…CQPSLFEVRS (195 aa)). Positions 23, 24, and 119 each coordinate a divalent metal cation.

It belongs to the RNase HII family. Mn(2+) serves as cofactor. Requires Mg(2+) as cofactor.

Its subcellular location is the cytoplasm. The catalysed reaction is Endonucleolytic cleavage to 5'-phosphomonoester.. Endonuclease that specifically degrades the RNA of RNA-DNA hybrids. This Trichodesmium erythraeum (strain IMS101) protein is Ribonuclease HII.